Consider the following 419-residue polypeptide: Putative trans-acting enoyl reductase MT2525 (419 aa).

Lys-127 is covalently cross-linked (Isoglutamyl lysine isopeptide (Lys-Gln) (interchain with Q-Cter in protein Pup)). Positions 197–232 are disordered; it reads NDPDARRQLSDPYMLSPDRGAEPELGPQPDLPSRRG. The helical transmembrane segment at 284-304 threads the bilayer; sequence VLAPVVSVVGGGVGNAMFGLA.

It belongs to the saccharopine dehydrogenase family. Enoyl reductase subfamily.

The protein resides in the cell membrane. The chain is Putative trans-acting enoyl reductase MT2525 from Mycobacterium tuberculosis (strain CDC 1551 / Oshkosh).